The following is a 385-amino-acid chain: Beta-lactamase (385 aa).

Positions 1–20 (MKRLLAFCLLFFAALGQAKV) are cleaved as a signal peptide. Ser-84 serves as the catalytic Acyl-ester intermediate. Tyr-170 functions as the Proton acceptor in the catalytic mechanism. Residue 335–337 (KTG) coordinates substrate.

The protein belongs to the class-C beta-lactamase family.

The protein localises to the periplasm. The enzyme catalyses a beta-lactam + H2O = a substituted beta-amino acid. Its function is as follows. This protein is a serine beta-lactamase with a substrate specificity for cephalosporins. In Lysobacter lactamgenus, this protein is Beta-lactamase.